The primary structure comprises 396 residues: L-lactate dehydrogenase (396 aa).

In terms of domain architecture, FMN hydroxy acid dehydrogenase spans methionine 1 to glycine 380. Residue tyrosine 24 coordinates substrate. Serine 106 and glutamine 127 together coordinate FMN. Position 129 (tyrosine 129) interacts with substrate. Threonine 155 is an FMN binding site. Substrate is bound at residue arginine 164. Position 251 (lysine 251) interacts with FMN. Histidine 275 (proton acceptor) is an active-site residue. Substrate is bound at residue arginine 278. Residue aspartate 306–arginine 330 coordinates FMN.

It belongs to the FMN-dependent alpha-hydroxy acid dehydrogenase family. The cofactor is FMN.

The protein resides in the cell inner membrane. The catalysed reaction is (S)-lactate + A = pyruvate + AH2. Functionally, catalyzes the conversion of L-lactate to pyruvate. Is coupled to the respiratory chain. This chain is L-lactate dehydrogenase, found in Citrobacter koseri (strain ATCC BAA-895 / CDC 4225-83 / SGSC4696).